The primary structure comprises 478 residues: UBP1-associated protein 2A (478 aa).

The interval 1-99 (MTKKRKLEGE…NQEDDDDEPI (99 aa)) is disordered. The span at 41-75 (GDVEEVEYEEVEEEQEEEVEDDDDEDDGDENEDQT) shows a compositional bias: acidic residues. 2 RRM domains span residues 140–217 (RKIF…LASK) and 245–328 (KKIY…KPGK). Disordered regions lie at residues 321 to 359 (IDGP…GGHG) and 442 to 478 (GTQP…YMGH). The segment covering 442-456 (GTQPGLQGGYQTPQP) has biased composition (low complexity). Residues 457–470 (GQGGTSRGQHGVGP) show a composition bias toward gly residues.

As to quaternary structure, interacts with UBA1A, UBA2A, UBP1A, UBP1B, UBP1C and SRK2E. In terms of tissue distribution, expressed in young leaves, flowers and embryos.

Its subcellular location is the nucleus. Its function is as follows. Heterogeneous nuclear ribonucleoprotein (hnRNP)-like protein that acts as a component of a complex regulating the turnover of mRNAs in the nucleus. Binds with high affinity to RNA molecules that contain U-rich sequences in 3'-UTRs. May function in complex with UBP1 and contribute to the stabilization of mRNAs in the nucleus. However, unlike UBP1, UBA2A does not stimulate pre-mRNA splicing. In Arabidopsis thaliana (Mouse-ear cress), this protein is UBP1-associated protein 2A (UBA2A).